A 667-amino-acid chain; its full sequence is Smc-like protein Sph2 (667 aa).

Coiled-coil stretches lie at residues 153 to 295 and 355 to 517; these read GSIQ…SLAT and GRLD…AITA.

The protein belongs to the Sph1/Sph2 family.

It is found in the cytoplasm. In terms of biological role, may play a role in replication. The polypeptide is Smc-like protein Sph2 (sph2) (Halobacterium salinarum (strain ATCC 29341 / DSM 671 / R1)).